The primary structure comprises 127 residues: Putative iron-sulfur cluster insertion protein ErpA (127 aa).

A compositionally biased stretch (polar residues) spans 1–14 (MNTPFNDGSGQTDP). The interval 1-20 (MNTPFNDGSGQTDPMTDIPT) is disordered. Iron-sulfur cluster-binding residues include cysteine 55, cysteine 119, and cysteine 121.

This sequence belongs to the HesB/IscA family. As to quaternary structure, homodimer. It depends on iron-sulfur cluster as a cofactor.

In terms of biological role, required for insertion of 4Fe-4S clusters. In Nitrosospira multiformis (strain ATCC 25196 / NCIMB 11849 / C 71), this protein is Putative iron-sulfur cluster insertion protein ErpA.